Reading from the N-terminus, the 307-residue chain is Aspartate carbamoyltransferase catalytic subunit (307 aa).

Carbamoyl phosphate is bound by residues R54 and T55. L-aspartate is bound at residue K83. R104, H132, and Q135 together coordinate carbamoyl phosphate. 2 residues coordinate L-aspartate: R165 and R228. Positions 267 and 268 each coordinate carbamoyl phosphate.

It belongs to the aspartate/ornithine carbamoyltransferase superfamily. ATCase family. In terms of assembly, heterododecamer (2C3:3R2) of six catalytic PyrB chains organized as two trimers (C3), and six regulatory PyrI chains organized as three dimers (R2).

It catalyses the reaction carbamoyl phosphate + L-aspartate = N-carbamoyl-L-aspartate + phosphate + H(+). It participates in pyrimidine metabolism; UMP biosynthesis via de novo pathway; (S)-dihydroorotate from bicarbonate: step 2/3. Functionally, catalyzes the condensation of carbamoyl phosphate and aspartate to form carbamoyl aspartate and inorganic phosphate, the committed step in the de novo pyrimidine nucleotide biosynthesis pathway. The polypeptide is Aspartate carbamoyltransferase catalytic subunit (Clostridium botulinum (strain Langeland / NCTC 10281 / Type F)).